The sequence spans 1755 residues: Transposon Ty1-JR1 Gag-Pol polyprotein (1755 aa).

The segment covering 1 to 16 has biased composition (low complexity); that stretch reads MESQQLSQHSHISHGS. Disordered regions lie at residues 1 to 93, 126 to 173, and 352 to 421; these read MESQ…MMTQ, PQSQ…RPPP, and GSRN…SKST. Polar residues-rich tracts occupy residues 48-60 and 127-152; these read TKAN…TPAS and QSQF…GNTF. A compositionally biased stretch (low complexity) spans 153–165; the sequence is TDSSSADSDMTST. Residues 299–401 form an RNA-binding region; sequence NNGIHINNKV…NSKSKTARAH (103 aa). Over residues 402–418 the composition is skewed to low complexity; sequence NVSTSNNSPSTDNDSIS. Ser416 carries the post-translational modification Phosphoserine. The For protease activity; shared with dimeric partner role is filled by Asp461. Residues 583–640 are integrase-type zinc finger-like; the sequence is NVHTSESTRKYPYPFIHRMLAHANAQTIRYSLKNNTITYFNESDVDWSSAIDYQCPDC. One can recognise an Integrase catalytic domain in the interval 660–835; it reads NSYEPFQYLH…AGLDISTLLP (176 aa). Positions 671 and 736 each coordinate Mg(2+). Disordered regions lie at residues 956–1087, 1092–1111, and 1130–1186; these read SKAV…ETEK, RSPS…NIVP, and DLPL…EDNE. A compositionally biased stretch (low complexity) spans 960–969; sequence SPTDSTPPST. Residues 1005 to 1015 are compositionally biased toward polar residues; the sequence is STPQISNIEST. The segment covering 1038-1053 has biased composition (basic and acidic residues); that stretch reads ESSHASKSKDFRHSDS. Polar residues-rich tracts occupy residues 1054–1082 and 1101–1111; these read YSEN…QISD and PENNSSHNIVP. A Bipartite nuclear localization signal motif is present at residues 1178–1212; that stretch reads KKRSLEDNETEIKVSRDTWNTKNMRSLEPPRSKKR. In terms of domain architecture, Reverse transcriptase Ty1/copia-type spans 1338-1476; sequence NNYYITQLDI…DILGLEIKYQ (139 aa). Mg(2+) contacts are provided by Asp1346, Asp1427, Asp1428, Asp1610, Glu1652, and Asp1685. Positions 1610 to 1752 constitute an RNase H Ty1/copia-type domain; that stretch reads DASYGNQPYY…IKTFKLLTNK (143 aa).

The capsid protein forms a homotrimer, from which the VLPs are assembled. The protease is a homodimer, whose active site consists of two apposed aspartic acid residues. In terms of processing, initially, virus-like particles (VLPs) are composed of the structural unprocessed proteins Gag and Gag-Pol, and also contain the host initiator methionine tRNA (tRNA(i)-Met) which serves as a primer for minus-strand DNA synthesis, and a dimer of genomic Ty RNA. Processing of the polyproteins occurs within the particle and proceeds by an ordered pathway, called maturation. First, the protease (PR) is released by autocatalytic cleavage of the Gag-Pol polyprotein yielding capsid protein p45 and a Pol-p154 precursor protein. This cleavage is a prerequisite for subsequent processing of Pol-p154 at the remaining sites to release the mature structural and catalytic proteins. Maturation takes place prior to the RT reaction and is required to produce transposition-competent VLPs.

The protein resides in the cytoplasm. It localises to the nucleus. It carries out the reaction DNA(n) + a 2'-deoxyribonucleoside 5'-triphosphate = DNA(n+1) + diphosphate. It catalyses the reaction Endonucleolytic cleavage to 5'-phosphomonoester.. Capsid protein (CA) is the structural component of the virus-like particle (VLP), forming the shell that encapsulates the retrotransposons dimeric RNA genome. The particles are assembled from trimer-clustered units and there are holes in the capsid shells that allow for the diffusion of macromolecules. CA also has nucleocapsid-like chaperone activity, promoting primer tRNA(i)-Met annealing to the multipartite primer-binding site (PBS), dimerization of Ty1 RNA and initiation of reverse transcription. Functionally, the aspartyl protease (PR) mediates the proteolytic cleavages of the Gag and Gag-Pol polyproteins after assembly of the VLP. Its function is as follows. Reverse transcriptase/ribonuclease H (RT) is a multifunctional enzyme that catalyzes the conversion of the retro-elements RNA genome into dsDNA within the VLP. The enzyme displays a DNA polymerase activity that can copy either DNA or RNA templates, and a ribonuclease H (RNase H) activity that cleaves the RNA strand of RNA-DNA heteroduplexes during plus-strand synthesis and hydrolyzes RNA primers. The conversion leads to a linear dsDNA copy of the retrotransposon that includes long terminal repeats (LTRs) at both ends. In terms of biological role, integrase (IN) targets the VLP to the nucleus, where a subparticle preintegration complex (PIC) containing at least integrase and the newly synthesized dsDNA copy of the retrotransposon must transit the nuclear membrane. Once in the nucleus, integrase performs the integration of the dsDNA into the host genome. This is Transposon Ty1-JR1 Gag-Pol polyprotein (TY1B-JR1) from Saccharomyces cerevisiae (strain ATCC 204508 / S288c) (Baker's yeast).